The following is a 383-amino-acid chain: S-adenosylmethionine synthase (383 aa).

His15 is an ATP binding site. Asp17 provides a ligand contact to Mg(2+). Glu43 contributes to the K(+) binding site. L-methionine-binding residues include Glu56 and Gln99. The tract at residues 99–109 (QSPDINQGVDR) is flexible loop. Residues 164 to 166 (DAK), 230 to 231 (RF), Asp239, 245 to 246 (RK), Ala262, and Lys266 contribute to the ATP site. Asp239 is an L-methionine binding site. Lys270 provides a ligand contact to L-methionine.

It belongs to the AdoMet synthase family. In terms of assembly, homotetramer; dimer of dimers. Mg(2+) is required as a cofactor. K(+) serves as cofactor.

It localises to the cytoplasm. It carries out the reaction L-methionine + ATP + H2O = S-adenosyl-L-methionine + phosphate + diphosphate. It participates in amino-acid biosynthesis; S-adenosyl-L-methionine biosynthesis; S-adenosyl-L-methionine from L-methionine: step 1/1. Catalyzes the formation of S-adenosylmethionine (AdoMet) from methionine and ATP. The overall synthetic reaction is composed of two sequential steps, AdoMet formation and the subsequent tripolyphosphate hydrolysis which occurs prior to release of AdoMet from the enzyme. In Shewanella denitrificans (strain OS217 / ATCC BAA-1090 / DSM 15013), this protein is S-adenosylmethionine synthase.